The following is a 417-amino-acid chain: UDP-N-acetylglucosamine 1-carboxyvinyltransferase (417 aa).

Residue 22 to 23 (KN) coordinates phosphoenolpyruvate. A UDP-N-acetyl-alpha-D-glucosamine-binding site is contributed by arginine 93. The active-site Proton donor is the cysteine 117. The residue at position 117 (cysteine 117) is a 2-(S-cysteinyl)pyruvic acid O-phosphothioketal. UDP-N-acetyl-alpha-D-glucosamine contacts are provided by residues 122-126 (RPVDQ), aspartate 305, and isoleucine 327.

This sequence belongs to the EPSP synthase family. MurA subfamily.

Its subcellular location is the cytoplasm. It carries out the reaction phosphoenolpyruvate + UDP-N-acetyl-alpha-D-glucosamine = UDP-N-acetyl-3-O-(1-carboxyvinyl)-alpha-D-glucosamine + phosphate. The protein operates within cell wall biogenesis; peptidoglycan biosynthesis. Functionally, cell wall formation. Adds enolpyruvyl to UDP-N-acetylglucosamine. The sequence is that of UDP-N-acetylglucosamine 1-carboxyvinyltransferase from Nitrosomonas eutropha (strain DSM 101675 / C91 / Nm57).